Reading from the N-terminus, the 88-residue chain is Probable Fe(2+)-trafficking protein (88 aa).

The protein belongs to the Fe(2+)-trafficking protein family.

Could be a mediator in iron transactions between iron acquisition and iron-requiring processes, such as synthesis and/or repair of Fe-S clusters in biosynthetic enzymes. The chain is Probable Fe(2+)-trafficking protein from Teredinibacter turnerae (strain ATCC 39867 / T7901).